We begin with the raw amino-acid sequence, 379 residues long: Queuine tRNA-ribosyltransferase (379 aa).

Residue Asp94 is the Proton acceptor of the active site. Substrate-binding positions include 94-98 (DSGGF), Asp148, Gln191, and Gly218. The RNA binding stretch occupies residues 249–255 (GVGSPDS). Residue Asp268 is the Nucleophile of the active site. An RNA binding; important for wobble base 34 recognition region spans residues 273–277 (TRIAR). Zn(2+)-binding residues include Cys306, Cys308, Cys311, and His337.

Belongs to the queuine tRNA-ribosyltransferase family. In terms of assembly, homodimer. Within each dimer, one monomer is responsible for RNA recognition and catalysis, while the other monomer binds to the replacement base PreQ1. Zn(2+) is required as a cofactor.

The catalysed reaction is 7-aminomethyl-7-carbaguanine + guanosine(34) in tRNA = 7-aminomethyl-7-carbaguanosine(34) in tRNA + guanine. The protein operates within tRNA modification; tRNA-queuosine biosynthesis. In terms of biological role, catalyzes the base-exchange of a guanine (G) residue with the queuine precursor 7-aminomethyl-7-deazaguanine (PreQ1) at position 34 (anticodon wobble position) in tRNAs with GU(N) anticodons (tRNA-Asp, -Asn, -His and -Tyr). Catalysis occurs through a double-displacement mechanism. The nucleophile active site attacks the C1' of nucleotide 34 to detach the guanine base from the RNA, forming a covalent enzyme-RNA intermediate. The proton acceptor active site deprotonates the incoming PreQ1, allowing a nucleophilic attack on the C1' of the ribose to form the product. After dissociation, two additional enzymatic reactions on the tRNA convert PreQ1 to queuine (Q), resulting in the hypermodified nucleoside queuosine (7-(((4,5-cis-dihydroxy-2-cyclopenten-1-yl)amino)methyl)-7-deazaguanosine). This Listeria monocytogenes serovar 1/2a (strain ATCC BAA-679 / EGD-e) protein is Queuine tRNA-ribosyltransferase.